A 499-amino-acid polypeptide reads, in one-letter code: U4/U6 small nuclear ribonucleoprotein Prp31 (499 aa).

Residues 1-37 (MSLADELLADLEEAAEEEEGGSYGEEEEEPAIEDVQE) are disordered. A compositionally biased stretch (acidic residues) spans 7–37 (LLADLEEAAEEEEGGSYGEEEEEPAIEDVQE). 2 coiled-coil regions span residues 85-120 (EAAP…KYSK) and 181-215 (EEEL…MSFI). One can recognise a Nop domain in the interval 215–333 (IAPNLSIIIG…IERKFDKWQE (119 aa)). A disordered region spans residues 334–357 (PPPVKQVKPLPAPLDGQRKKRGGR). The Nuclear localization signal (NLS) signature appears at 351-364 (RKKRGGRRYRKMKE). Phosphoserine occurs at positions 379, 395, and 432. An N6-acetyllysine modification is found at lysine 438. At serine 439 the chain carries Phosphoserine. Residue threonine 440 is modified to Phosphothreonine. At serine 450 the chain carries Phosphoserine. A Phosphothreonine modification is found at threonine 455. Glycyl lysine isopeptide (Lys-Gly) (interchain with G-Cter in SUMO2) cross-links involve residues lysine 471 and lysine 478.

This sequence belongs to the PRP31 family. In terms of assembly, identified in the spliceosome B complex. Component of the U4/U6-U5 tri-snRNP complex composed of the U4, U6 and U5 snRNAs and at least PRPF3, PRPF4, PRPF6, PRPF8, PRPF31, SNRNP200, TXNL4A, SNRNP40, DDX23, CD2BP2, PPIH, SNU13, EFTUD2, SART1 and USP39. Interacts with a complex formed by SNU13 and U4 snRNA, but not with SNU13 or U4 snRNA alone. The complex formed by SNU13 and PRPF31 also binds U4atac snRNA, a characteristic component of specific, less abundant spliceosomal complexes. Interacts with PRPF6/U5 snRNP-associated 102 kDa protein. Component of some MLL1/MLL complex, at least composed of the core components KMT2A/MLL1, ASH2L, HCFC1/HCF1, WDR5 and RBBP5, as well as the facultative components BACC1, CHD8, E2F6, HSP70, INO80C, KANSL1, LAS1L, MAX, MCRS1, MGA, KAT8/MOF, PELP1, PHF20, PRP31, RING2, RUVB1/TIP49A, RUVB2/TIP49B, SENP3, TAF1, TAF4, TAF6, TAF7, TAF9 and TEX10. Interacts (via its NLS) with CTNNBL1. Interacts with USH1G. Phosphorylated by PRP4K during spliceosome assembly. In terms of tissue distribution, ubiquitously expressed.

Its subcellular location is the nucleus. The protein localises to the nucleus speckle. It localises to the cajal body. Its function is as follows. Involved in pre-mRNA splicing as component of the spliceosome. Required for the assembly of the U4/U5/U6 tri-snRNP complex, one of the building blocks of the spliceosome. The polypeptide is U4/U6 small nuclear ribonucleoprotein Prp31 (Homo sapiens (Human)).